We begin with the raw amino-acid sequence, 208 residues long: V-type ATP synthase subunit D (208 aa).

The protein belongs to the V-ATPase D subunit family.

Functionally, produces ATP from ADP in the presence of a proton gradient across the membrane. The chain is V-type ATP synthase subunit D from Streptococcus pyogenes serotype M6 (strain ATCC BAA-946 / MGAS10394).